An 88-amino-acid polypeptide reads, in one-letter code: Small ribosomal subunit protein bS18B (88 aa).

It belongs to the bacterial ribosomal protein bS18 family. Part of the 30S ribosomal subunit. Forms a tight heterodimer with protein bS6.

Functionally, binds as a heterodimer with protein bS6 to the central domain of the 16S rRNA, where it helps stabilize the platform of the 30S subunit. The protein is Small ribosomal subunit protein bS18B of Mycolicibacterium paratuberculosis (strain ATCC BAA-968 / K-10) (Mycobacterium paratuberculosis).